A 127-amino-acid polypeptide reads, in one-letter code: Large ribosomal subunit protein bL20 (127 aa).

The protein belongs to the bacterial ribosomal protein bL20 family.

In terms of biological role, binds directly to 23S ribosomal RNA and is necessary for the in vitro assembly process of the 50S ribosomal subunit. It is not involved in the protein synthesizing functions of that subunit. The protein is Large ribosomal subunit protein bL20 of Streptomyces griseus subsp. griseus (strain JCM 4626 / CBS 651.72 / NBRC 13350 / KCC S-0626 / ISP 5235).